We begin with the raw amino-acid sequence, 242 residues long: Lactate utilization protein A 2 (242 aa).

Belongs to the LutA/YkgE family.

Its function is as follows. Is involved in L-lactate degradation and allows cells to grow with lactate as the sole carbon source. This Bacillus cereus (strain AH820) protein is Lactate utilization protein A 2.